A 150-amino-acid polypeptide reads, in one-letter code: 3-hydroxyacyl-[acyl-carrier-protein] dehydratase FabZ (150 aa).

H54 is a catalytic residue.

Belongs to the thioester dehydratase family. FabZ subfamily.

The protein localises to the cytoplasm. It catalyses the reaction a (3R)-hydroxyacyl-[ACP] = a (2E)-enoyl-[ACP] + H2O. Its function is as follows. Involved in unsaturated fatty acids biosynthesis. Catalyzes the dehydration of short chain beta-hydroxyacyl-ACPs and long chain saturated and unsaturated beta-hydroxyacyl-ACPs. The protein is 3-hydroxyacyl-[acyl-carrier-protein] dehydratase FabZ of Vibrio parahaemolyticus serotype O3:K6 (strain RIMD 2210633).